A 192-amino-acid polypeptide reads, in one-letter code: Phosphoheptose isomerase (192 aa).

The SIS domain maps to 37-192; sequence LADSFKAGGK…IQLIEKEMAK (156 aa). Residue 52 to 54 coordinates substrate; the sequence is NGG. Residues H61 and E65 each contribute to the Zn(2+) site. Substrate-binding positions include E65, 93 to 94, 119 to 121, S124, and Q172; these read ND and STS. The Zn(2+) site is built by Q172 and H180.

This sequence belongs to the SIS family. GmhA subfamily. In terms of assembly, homotetramer. It depends on Zn(2+) as a cofactor.

It localises to the cytoplasm. The catalysed reaction is 2 D-sedoheptulose 7-phosphate = D-glycero-alpha-D-manno-heptose 7-phosphate + D-glycero-beta-D-manno-heptose 7-phosphate. It participates in carbohydrate biosynthesis; D-glycero-D-manno-heptose 7-phosphate biosynthesis; D-glycero-alpha-D-manno-heptose 7-phosphate and D-glycero-beta-D-manno-heptose 7-phosphate from sedoheptulose 7-phosphate: step 1/1. Catalyzes the isomerization of sedoheptulose 7-phosphate in D-glycero-D-manno-heptose 7-phosphate. In Escherichia fergusonii (strain ATCC 35469 / DSM 13698 / CCUG 18766 / IAM 14443 / JCM 21226 / LMG 7866 / NBRC 102419 / NCTC 12128 / CDC 0568-73), this protein is Phosphoheptose isomerase.